Consider the following 407-residue polypeptide: Venom metalloproteinase 3 (407 aa).

N-linked (GlcNAc...) asparagine glycosylation is found at Asn-42, Asn-91, Asn-126, and Asn-166. Residues 191 to 405 form the Peptidase M12B domain; it reads FYPKLLVLVD…TSAACLKDTY (215 aa). 2 cysteine pairs are disulfide-bonded: Cys-317/Cys-400 and Cys-356/Cys-384. His-340 contacts Zn(2+). Residue Glu-341 is part of the active site. 2 residues coordinate Zn(2+): His-344 and His-350. The N-linked (GlcNAc...) asparagine glycan is linked to Asn-391.

In the C-terminal section; belongs to the venom metalloproteinase (M12B) family. In terms of assembly, monomer. It depends on Zn(2+) as a cofactor. In terms of tissue distribution, expressed by the venom gland.

The protein localises to the secreted. Its activity is regulated as follows. The gelatinase activity is inhibited by EDTA. Functionally, the recombinant protein has gelatinase activity. In vivo, injection of this recombinant into fifth instar L.oleracea (host) larvae results in partial insect mortality associated with the molt to sixth instar, with surviving insects showing retarded development and growth. In Eulophus pennicornis (Parasitoid wasp), this protein is Venom metalloproteinase 3.